A 382-amino-acid polypeptide reads, in one-letter code: Kelch domain-containing protein 3 (382 aa).

Kelch repeat units lie at residues Arg-25–Arg-77, Thr-88–Lys-138, Ile-139–Gly-189, His-191–Gly-249, and Leu-251–Asp-301.

Component of a CRL2(KLHDC3) complex, also named ECS(KLHDC3) complex, composed of CUL2, Elongin BC (ELOB and ELOC), RBX1 and substrate-specific adapter KLHDC3. May form oligomers as a KLHDC3-ELOB-ELOC complex; this interaction is likely autoinhibitory for the E3 ligase complex. As to expression, expressed specifically in testis, particularly in pachytene spermatocytes.

The protein resides in the cytoplasm. It participates in protein modification; protein ubiquitination. Functionally, substrate-recognition component of a Cul2-RING (CRL2) E3 ubiquitin-protein ligase complex of the DesCEND (destruction via C-end degrons) pathway, which recognizes a C-degron located at the extreme C terminus of target proteins, leading to their ubiquitination and degradation. The C-degron recognized by the DesCEND pathway is usually a motif of less than ten residues and can be present in full-length proteins, truncated proteins or proteolytically cleaved forms. The CRL2(KLHDC3) complex specifically recognizes proteins with a glycine (Gly) at the C-terminus, leading to their ubiquitination and degradation: recognizes the C-terminal -Arg-(Xaa)n-Arg-Gly, -Arg-(Xaa)n-Lys-Gly, and -Arg-(Xaa)n-Gln-Gly degrons. The CRL2(KLHDC3) complex mediates ubiquitination and degradation of truncated SELENOV and SEPHS2 selenoproteins produced by failed UGA/Sec decoding, which end with a glycine. May be involved in meiotic recombination process. The polypeptide is Kelch domain-containing protein 3 (Mus musculus (Mouse)).